Consider the following 328-residue polypeptide: dTDP-4-dehydrorhamnose 3,5-epimerase (328 aa).

Substrate is bound by residues Arg23, Glu28, Gln46–Asn48, and Arg58. His61 (proton acceptor) is an active-site residue. Substrate is bound by residues Lys70 and His117. Tyr130 acts as the Proton donor in catalysis. Substrate-binding residues include Glu141 and Lys166.

It belongs to the dTDP-4-dehydrorhamnose 3,5-epimerase family. Homodimer.

The enzyme catalyses dTDP-4-dehydro-6-deoxy-alpha-D-glucose = dTDP-4-dehydro-beta-L-rhamnose. It participates in carbohydrate biosynthesis; dTDP-L-rhamnose biosynthesis. It functions in the pathway bacterial outer membrane biogenesis; LPS O-antigen biosynthesis. Its function is as follows. Catalyzes the epimerization of the C3' and C5'positions of dTDP-6-deoxy-D-xylo-4-hexulose, forming dTDP-6-deoxy-L-lyxo-4-hexulose. The protein is dTDP-4-dehydrorhamnose 3,5-epimerase (rfbC) of Neisseria gonorrhoeae.